The primary structure comprises 200 residues: Pyridoxal 5'-phosphate synthase subunit PdxT (200 aa).

L-glutamine is bound at residue 52 to 54 (GES). Cysteine 84 functions as the Nucleophile in the catalytic mechanism. L-glutamine is bound by residues arginine 115 and 143–144 (IR). Residues histidine 179 and glutamate 181 each act as charge relay system in the active site.

It belongs to the glutaminase PdxT/SNO family. In terms of assembly, in the presence of PdxS, forms a dodecamer of heterodimers. Only shows activity in the heterodimer.

The catalysed reaction is aldehydo-D-ribose 5-phosphate + D-glyceraldehyde 3-phosphate + L-glutamine = pyridoxal 5'-phosphate + L-glutamate + phosphate + 3 H2O + H(+). The enzyme catalyses L-glutamine + H2O = L-glutamate + NH4(+). Its pathway is cofactor biosynthesis; pyridoxal 5'-phosphate biosynthesis. Functionally, catalyzes the hydrolysis of glutamine to glutamate and ammonia as part of the biosynthesis of pyridoxal 5'-phosphate. The resulting ammonia molecule is channeled to the active site of PdxS. This is Pyridoxal 5'-phosphate synthase subunit PdxT from Methanosarcina barkeri (strain Fusaro / DSM 804).